The chain runs to 352 residues: S-norcoclaurine synthase 1 (352 aa).

The 105-residue stretch at 200–304 folds into the Fe2OG dioxygenase domain; the sequence is KPLRTVFNRE…RLSIAAFHDP (105 aa). Fe cation contacts are provided by His-228, Asp-230, and His-285.

Belongs to the iron/ascorbate-dependent oxidoreductase family. As to quaternary structure, monomer. Fe cation serves as cofactor.

The catalysed reaction is (4-hydroxyphenyl)acetaldehyde + dopamine = (S)-norcoclaurine + H2O. Its activity is regulated as follows. Inhibited by O-phenanthroline, but not by EDTA. Involved in the biosynthesis of the common precursor of all benzylisoquinoline alkaloids such as morphine, sanguinarine, codeine or berberine. Condenses dopamine and phenylacetaldehyde, 3,4-dihydrophenylacetaldehyde or 4-hydroxyphenylacetaldehyde. This is S-norcoclaurine synthase 1 (NCS1) from Coptis japonica (Japanese goldthread).